An 892-amino-acid chain; its full sequence is MEINHDYRVKLFDELGFERKQCTECNQWFWTLDKDRTTCGDSPCDEYSFIGSPITRKKYTYNEMVREFTNFFAEKGHSPVKRSPVVAKRWRDDILLTIASIAVFQPWVTNGLVKPVKNPLVIAQPCIRLNDIDNVGRTGRHLTCFTMGAHHAFNSKDDYKYWTDKTVEYCFELMNRLGIDGKTITFIESWWEGGGNAGPCYEVITHGVELATLVFMQYKKVGSEYEEIPLKIVDTGYGIERFAWASQGTPTVYESLFSEVIEKLKEDAGIPGVDEKIMAESATLAGLMDIENVGDLRVLRQKVAEKIGMDVDELDKLISPLEYIYAIADHTRCLSFMFGDGIVPSNVKEGYLARLVLRKTLRYMEKIGISMSIKDIISMQLENMKEIYPELSEMKEYIMDVLDSEEKKYIQTVNRGRGIVERMAASKSEITLDDLIELYDSNGLPPEIVKDVVDELNKKGKKTIAITVPDNFYTIVAERHEEEKPEEVVSTKKELPEVEVSETELLFFKHPTQVEFEAKVLKTVEKYVVLDKTLFYAEGGGQKYDIGQINGIEVIDVQKKNGIVFHKVSDISKFKEGDIVKGTVNWENRLKLMRNHTATHVINAAATRVLGKHIWQTGSNVDTEKGRLDITHYERISREQVKEIERIANEIVLSKMPVNSTFMDRNDAEQKYGFTIYQGGVVPGDTLRIIEIEGTDVEACGGTHCSNTSEIGYIKVLKTERIQDGVERLEYSTGMGSVSEIAVLEDTLIDSAEILGIPNDQLPKTVKRFFEEWKEQKKTIEELQKKVGELVKYELADKFEKYGNYEVLVEQVSGTPNELMSIADNLAVGNKLIVLMNENDYLLCKRGENVELSMKELIRNIGKGGGKDNLAQGKYSENKEQITEKIIQILNK.

His-596, His-600, Cys-700, and His-704 together coordinate Zn(2+).

This sequence belongs to the class-II aminoacyl-tRNA synthetase family. It depends on Zn(2+) as a cofactor.

Its subcellular location is the cytoplasm. It catalyses the reaction tRNA(Ala) + L-alanine + ATP = L-alanyl-tRNA(Ala) + AMP + diphosphate. Functionally, catalyzes the attachment of alanine to tRNA(Ala) in a two-step reaction: alanine is first activated by ATP to form Ala-AMP and then transferred to the acceptor end of tRNA(Ala). Also edits incorrectly charged Ser-tRNA(Ala) and Gly-tRNA(Ala) via its editing domain. This Methanococcus maripaludis (strain C7 / ATCC BAA-1331) protein is Alanine--tRNA ligase.